Reading from the N-terminus, the 58-residue chain is uncharacterized protein (58 aa).

This is an uncharacterized protein from Methanocaldococcus jannaschii (strain ATCC 43067 / DSM 2661 / JAL-1 / JCM 10045 / NBRC 100440) (Methanococcus jannaschii).